The sequence spans 340 residues: tRNA N6-adenosine threonylcarbamoyltransferase (340 aa).

Residues H109 and H113 each coordinate Fe cation. Substrate contacts are provided by residues 132–136, D165, G178, and N277; that span reads AISGA. D302 contributes to the Fe cation binding site.

This sequence belongs to the KAE1 / TsaD family. Fe(2+) is required as a cofactor.

The protein localises to the cytoplasm. It catalyses the reaction L-threonylcarbamoyladenylate + adenosine(37) in tRNA = N(6)-L-threonylcarbamoyladenosine(37) in tRNA + AMP + H(+). Functionally, required for the formation of a threonylcarbamoyl group on adenosine at position 37 (t(6)A37) in tRNAs that read codons beginning with adenine. Is involved in the transfer of the threonylcarbamoyl moiety of threonylcarbamoyl-AMP (TC-AMP) to the N6 group of A37, together with TsaE and TsaB. TsaD likely plays a direct catalytic role in this reaction. This Chlamydia muridarum (strain MoPn / Nigg) protein is tRNA N6-adenosine threonylcarbamoyltransferase.